A 436-amino-acid polypeptide reads, in one-letter code: 3-ketoacyl-CoA thiolase (436 aa).

Cys99 (acyl-thioester intermediate) is an active-site residue. Active-site proton acceptor residues include His392 and Cys422.

Belongs to the thiolase-like superfamily. Thiolase family. As to quaternary structure, heterotetramer of two alpha chains (FadJ) and two beta chains (FadI).

It localises to the cytoplasm. The catalysed reaction is an acyl-CoA + acetyl-CoA = a 3-oxoacyl-CoA + CoA. The protein operates within lipid metabolism; fatty acid beta-oxidation. Its function is as follows. Catalyzes the final step of fatty acid oxidation in which acetyl-CoA is released and the CoA ester of a fatty acid two carbons shorter is formed. The protein is 3-ketoacyl-CoA thiolase of Escherichia coli O157:H7.